We begin with the raw amino-acid sequence, 211 residues long: Protein-methionine-sulfoxide reductase heme-binding subunit MsrQ (211 aa).

The next 5 membrane-spanning stretches (helical) occupy residues 17 to 37 (LAGL…GLGA), 54 to 74 (FLLA…PLLI), 82 to 102 (LWCF…ELGV), 116 to 136 (PYLT…FTST), and 153 to 173 (FVYL…KIIS).

This sequence belongs to the MsrQ family. Heterodimer of a catalytic subunit (MsrP) and a heme-binding subunit (MsrQ). It depends on FMN as a cofactor. Heme b serves as cofactor.

Its subcellular location is the cell inner membrane. Its function is as follows. Part of the MsrPQ system that repairs oxidized periplasmic proteins containing methionine sulfoxide residues (Met-O), using respiratory chain electrons. Thus protects these proteins from oxidative-stress damage caused by reactive species of oxygen and chlorine generated by the host defense mechanisms. MsrPQ is essential for the maintenance of envelope integrity under bleach stress, rescuing a wide series of structurally unrelated periplasmic proteins from methionine oxidation, including the primary periplasmic chaperone SurA and the lipoprotein Pal. MsrQ provides electrons for reduction to the reductase catalytic subunit MsrP, using the quinone pool of the respiratory chain. The polypeptide is Protein-methionine-sulfoxide reductase heme-binding subunit MsrQ (Escherichia coli (strain SMS-3-5 / SECEC)).